A 274-amino-acid chain; its full sequence is Protein TIC 20-I, chloroplastic (274 aa).

The transit peptide at 1 to 65 (MITGYSTPSA…ELPRVSRGVP (65 aa)) directs the protein to the chloroplast. 4 consecutive transmembrane segments (helical) span residues 130 to 152 (LPYLMPLHETWMYAETAYHLHPF), 167 to 187 (IGRLPSWFLMAYFFVAYLGIV), 200 to 220 (VVMGMLLEIALQVIGTVSKWM), and 229 to 249 (FGMHFWTAVAFAYLFTVLESI).

The protein belongs to the Tic20 family. As to quaternary structure, part of the Tic complex. Component of the 1-MD complex, composed of TIC20-I, TIC214, TIC100 and TIC56. Interacts with the translocating preproteins. Hydrolysis of ATP is essential for the formation of this complex. The 1-MD complex interacts with TIC21. Expressed in leaves, shoots and roots. High expression in mature photosynthetic tissues. Lower levels in non-photosynthetic tissues and roots.

It localises to the plastid. The protein localises to the chloroplast inner membrane. In terms of biological role, involved in protein precursor import into chloroplasts. May be part of an intermediate translocation complex acting as a protein-conducting channel at the inner envelope. Seems to be specific for photosynthesis-related pre-proteins. Partially redundant with TIC20-IV, but not with TIC20-II or TIC20-V. In Arabidopsis thaliana (Mouse-ear cress), this protein is Protein TIC 20-I, chloroplastic.